We begin with the raw amino-acid sequence, 473 residues long: Cysteine--tRNA ligase (473 aa).

C28 is a Zn(2+) binding site. Residues 30 to 40 carry the 'HIGH' region motif; sequence PTVYNMPHIGN. Zn(2+) contacts are provided by C213, H238, and E242. The short motif at 270 to 274 is the 'KMSKS' region element; that stretch reads KMSKS. K273 lines the ATP pocket.

Belongs to the class-I aminoacyl-tRNA synthetase family. Requires Zn(2+) as cofactor.

It localises to the cytoplasm. It carries out the reaction tRNA(Cys) + L-cysteine + ATP = L-cysteinyl-tRNA(Cys) + AMP + diphosphate. The sequence is that of Cysteine--tRNA ligase from Methanosarcina acetivorans (strain ATCC 35395 / DSM 2834 / JCM 12185 / C2A).